The sequence spans 395 residues: Major outer membrane porin, serovar F (395 aa).

The N-terminal stretch at 1 to 22 is a signal peptide; the sequence is MKKLLKSVLVFAALSSASSLQA.

It belongs to the chlamydial porin (CP) (TC 1.B.2) family. Part of a disulfide cross-linked outer membrane complex (COMC) composed of the major outer membrane porin (MOMP), the small cysteine-rich protein (OmcA) and the large cysteine-rich periplasmic protein (OmcB).

Its subcellular location is the cell outer membrane. In terms of biological role, in elementary bodies (EBs, the infectious stage, which is able to survive outside the host cell) provides the structural integrity of the outer envelope through disulfide cross-links with the small cysteine-rich protein and the large cysteine-rich periplasmic protein. It has been described in publications as the Sarkosyl-insoluble COMC (Chlamydia outer membrane complex), and serves as the functional equivalent of peptidoglycan. Functionally, permits diffusion of specific solutes through the outer membrane. This Chlamydia trachomatis protein is Major outer membrane porin, serovar F (ompA).